The primary structure comprises 205 residues: Small ribosomal subunit protein uS4 (205 aa).

The tract at residues 1 to 46 is disordered; it reads MSKRHSAKYKIDRRMGENLWGRPKSPVNSRSYGPGQHGQRRKSKVS. The S4 RNA-binding domain maps to 94–154; sequence SRLDAIVYRA…EKSRNMALVL (61 aa).

This sequence belongs to the universal ribosomal protein uS4 family. In terms of assembly, part of the 30S ribosomal subunit. Contacts protein S5. The interaction surface between S4 and S5 is involved in control of translational fidelity.

Functionally, one of the primary rRNA binding proteins, it binds directly to 16S rRNA where it nucleates assembly of the body of the 30S subunit. In terms of biological role, with S5 and S12 plays an important role in translational accuracy. The chain is Small ribosomal subunit protein uS4 from Caulobacter vibrioides (strain ATCC 19089 / CIP 103742 / CB 15) (Caulobacter crescentus).